The following is a 309-amino-acid chain: Glutaminase (309 aa).

Substrate-binding residues include serine 64, asparagine 114, glutamate 160, asparagine 167, tyrosine 191, tyrosine 243, and valine 261.

The protein belongs to the glutaminase family. In terms of assembly, homotetramer.

It catalyses the reaction L-glutamine + H2O = L-glutamate + NH4(+). This Methylobacterium sp. (strain 4-46) protein is Glutaminase.